We begin with the raw amino-acid sequence, 253 residues long: MTKPHDFKTKAIIVRKTKCGEADRILSLLTPDLGLIQGFAKSVRKTTSKLSGHLELLCYSEVSLARGKAIDTITGSQTIQSFLNIRNSLQLSAMAFYACELAYHFSPEEAANPALFQLLLSTLEELDNGSQPELCLKYFEINLLASSGYKPELRECANCHKKLQATINYYSPESGGVICPNCRNTQIGMPVSVNTVKVLRYIQENSFSSICRLKINREILSELELAIRANIRFVLEKEPKALFWLDSLRLADL.

It belongs to the RecO family.

Involved in DNA repair and RecF pathway recombination. The protein is DNA repair protein RecO of Dehalococcoides mccartyi (strain ATCC BAA-2100 / JCM 16839 / KCTC 5957 / BAV1).